Reading from the N-terminus, the 180-residue chain is NAD(P)H-quinone oxidoreductase subunit I, chloroplastic (180 aa).

2 consecutive 4Fe-4S ferredoxin-type domains span residues 55–84 (GRIH…VDWR) and 95–124 (LNYS…MTEE). [4Fe-4S] cluster contacts are provided by cysteine 64, cysteine 67, cysteine 70, cysteine 74, cysteine 104, cysteine 107, cysteine 110, and cysteine 114.

It belongs to the complex I 23 kDa subunit family. NDH is composed of at least 16 different subunits, 5 of which are encoded in the nucleus. It depends on [4Fe-4S] cluster as a cofactor.

The protein localises to the plastid. It is found in the chloroplast thylakoid membrane. It catalyses the reaction a plastoquinone + NADH + (n+1) H(+)(in) = a plastoquinol + NAD(+) + n H(+)(out). The enzyme catalyses a plastoquinone + NADPH + (n+1) H(+)(in) = a plastoquinol + NADP(+) + n H(+)(out). Its function is as follows. NDH shuttles electrons from NAD(P)H:plastoquinone, via FMN and iron-sulfur (Fe-S) centers, to quinones in the photosynthetic chain and possibly in a chloroplast respiratory chain. The immediate electron acceptor for the enzyme in this species is believed to be plastoquinone. Couples the redox reaction to proton translocation, and thus conserves the redox energy in a proton gradient. The polypeptide is NAD(P)H-quinone oxidoreductase subunit I, chloroplastic (Liriodendron tulipifera (Tuliptree)).